The primary structure comprises 184 residues: UPF0398 protein BCB4264_A1614 (184 aa).

This sequence belongs to the UPF0398 family.

This chain is UPF0398 protein BCB4264_A1614, found in Bacillus cereus (strain B4264).